Consider the following 277-residue polypeptide: Bis(5'-nucleosyl)-tetraphosphatase, symmetrical (277 aa).

Belongs to the Ap4A hydrolase family.

The catalysed reaction is P(1),P(4)-bis(5'-adenosyl) tetraphosphate + H2O = 2 ADP + 2 H(+). Its function is as follows. Hydrolyzes diadenosine 5',5'''-P1,P4-tetraphosphate to yield ADP. The polypeptide is Bis(5'-nucleosyl)-tetraphosphatase, symmetrical (Azotobacter vinelandii (strain DJ / ATCC BAA-1303)).